We begin with the raw amino-acid sequence, 490 residues long: GTPase Der (490 aa).

EngA-type G domains are found at residues 3-166 (PVVA…MEDL) and 203-376 (IKLA…DSST). GTP-binding positions include 9–16 (GRPNVGKS), 56–60 (DTGGI), 118–121 (NKTD), 209–216 (GRPNVGKS), 256–260 (DTAGV), and 321–324 (NKWD). The KH-like domain occupies 377–461 (RRVGTSMLTR…PIRIQFKEGE (85 aa)).

It belongs to the TRAFAC class TrmE-Era-EngA-EngB-Septin-like GTPase superfamily. EngA (Der) GTPase family. In terms of assembly, associates with the 50S ribosomal subunit.

In terms of biological role, GTPase that plays an essential role in the late steps of ribosome biogenesis. The protein is GTPase Der of Escherichia coli O127:H6 (strain E2348/69 / EPEC).